Reading from the N-terminus, the 695-residue chain is MPMHIPFPFNWIPTLPVARCQESPSLLKRAGTEKLREVFLKYASIQKNGEHYMTSEDFVRKFLGLFSESAFNDESVRLLANIADTSKDGLISFSEFQAFEGLLCTPDALYRTAFQLFDRKGNGTVSYADFADVVQKTELHSKIPFSLDGPFIKRYFGDKKQRLINYAEFTQLLHDFHEEHAMEAFRSKDPAGTGFISPLDFQDIIVNVKRHLLTPGVRDNLVSVTEGHKVSFPYFIAFTSLLNNMELIKQVYLHATEGSRTDMITKDQILLAAQTMSQITPLEIDILFHLAGAVHQAGRIDYSDLSNIAPEHYTKHMTHRLAEIKAVESPADRSAFIQVLESSYRFTLGSFAGAVGATVVYPIDLVKTRMQNQRAGSYIGEVAYRNSWDCFKKVVRHEGFMGLYRGLLPQLMGVAPEKAIKLTVNDLVRDKLTDKKGNIPTWAEVLAGGCAGASQVVFTNPLEIVKIRLQVAGEIASGSKIRAWSVVRELGLFGLYKGARACLLRDVPFSAIYFPTYAHTKAMMADKDGYNHPLTLLAAGAIAGVPAASLVTPADVIKTRLQVVARSGQTTYTGVWDATKKIMAEEGPRAFWKGTAARVFRSSPQFGVTLVTYELLQRLFYVDFGGTQPKGSEAHKITTPLEQAAASVTTENVDHIGGYRAAVPLLAGVESKFGLYLPRFGRGVTAASPSTATGS.

The tract at residues 1 to 310 (MPMHIPFPFN…DYSDLSNIAP (310 aa)) is N-terminal domain. Topologically, residues 2 to 345 (PMHIPFPFNW…FIQVLESSYR (344 aa)) are mitochondrial intermembrane. EF-hand domains lie at 71-104 (FNDE…GLLC), 105-140 (TPDA…TELH), 142-175 (KIPF…LLHD), and 176-211 (FHEE…VKRH). D84, S86, D88, L90, E95, D118, N122, T124, and D129 together coordinate Ca(2+). Residues D189, T193, and D200 each coordinate Ca(2+). The interval 311 to 327 (EHYTKHMTHRLAEIKAV) is linker loop domain. The interval 336–627 (FIQVLESSYR…RLFYVDFGGT (292 aa)) is carrier domain. Solcar repeat units lie at residues 340 to 431 (LESS…VRDK), 439 to 523 (IPTW…TKAM), and 531 to 619 (NHPL…LQRL). A helical transmembrane segment spans residues 346 to 363 (FTLGSFAGAVGATVVYPI). At 364-405 (DLVKTRMQNQRAGSYIGEVAYRNSWDCFKKVVRHEGFMGLYR) the chain is on the mitochondrial matrix side. Residues 406–425 (GLLPQLMGVAPEKAIKLTVN) form a helical membrane-spanning segment. Topologically, residues 426-448 (DLVRDKLTDKKGNIPTWAEVLAG) are mitochondrial intermembrane. A helical transmembrane segment spans residues 449 to 462 (GCAGASQVVFTNPL). The Mitochondrial matrix segment spans residues 463 to 497 (EIVKIRLQVAGEIASGSKIRAWSVVRELGLFGLYK). Residues 498–517 (GARACLLRDVPFSAIYFPTY) form a helical membrane-spanning segment. Topologically, residues 518–536 (AHTKAMMADKDGYNHPLTL) are mitochondrial intermembrane. The chain crosses the membrane as a helical span at residues 537-554 (LAAGAIAGVPAASLVTPA). Residues 555-593 (DVIKTRLQVVARSGQTTYTGVWDATKKIMAEEGPRAFWK) are Mitochondrial matrix-facing. The chain crosses the membrane as a helical span at residues 594–613 (GTAARVFRSSPQFGVTLVTY). The Mitochondrial intermembrane segment spans residues 614–695 (ELLQRLFYVD…AASPSTATGS (82 aa)). Residues 628–695 (QPKGSEAHKI…AASPSTATGS (68 aa)) form a C-terminal domain region.

It belongs to the mitochondrial carrier (TC 2.A.29) family. Homodimer (via N-terminus). Ca(2+) serves as cofactor. As to expression, expressed throughout the body in both males and females, including in ovaries and testes. In terms of tissue distribution, specifically expressed in female ovaries. Expressed throughout the body in both males and females but absent from ovaries and testes.

The protein localises to the mitochondrion inner membrane. The enzyme catalyses L-aspartate(in) + L-glutamate(out) + H(+)(out) = L-aspartate(out) + L-glutamate(in) + H(+)(in). It catalyses the reaction 3-sulfino-L-alanine(out) + L-glutamate(in) + H(+)(in) = 3-sulfino-L-alanine(in) + L-glutamate(out) + H(+)(out). The catalysed reaction is L-2-aminoadipate(in) + L-glutamate(out) + H(+)(out) = L-2-aminoadipate(out) + L-glutamate(in) + H(+)(in). It carries out the reaction L-glutamine(in) + L-glutamate(out) + Na(+)(out) + H(+)(out) = L-glutamine(out) + L-glutamate(in) + Na(+)(in) + H(+)(in). Its activity is regulated as follows. Activated by Ca(2+). Inhibited by p-chloromercuribenzoate, pyrocarbonate, mersalyl, tannic acid and N-ethylmaleimide. Functionally, mitochondrial electrogenic aspartate/glutamate antiporter that favors efflux of aspartate and entry of glutamate and proton within the mitochondria as part of the malate-aspartate shuttle. Also mediates the exchange of L-cysteinesulfinate (3-sulfino-L-alanine) for L-glutamate. Necessary for gamma-aminobutyric acid (GABA) uptake in brain mitochondria in response to increased mitochondrial membrane polarization; does not possess detectable GABA transport activity but role may be indirect. Possesses transport activity towards L-aspartate, L-glutamate and L-cysteinesulfinate (3-sulfino-L-alanine). L-glutamine transport activity is undetectable. GABA transport activity is undetectable. Its function is as follows. Possesses transport activity towards L-aspartate, L-glutamate and L-cysteinesulfinate (3-sulfino-L-alanine). Has a wider substrate specificity range that includes L-2-aminoadipate and L-glutamine. GABA transport activity is undetectable. This is Electrogenic aspartate/glutamate antiporter Aralar, mitochondrial from Drosophila melanogaster (Fruit fly).